We begin with the raw amino-acid sequence, 375 residues long: Queuine tRNA-ribosyltransferase (375 aa).

Residue Asp-89 is the Proton acceptor of the active site. Residues Asp-89–Phe-93, Asp-143, Gln-185, and Gly-212 each bind substrate. The segment at Gly-243–Asp-249 is RNA binding. The active-site Nucleophile is the Asp-262. The tract at residues Thr-267–Arg-271 is RNA binding; important for wobble base 34 recognition. Zn(2+)-binding residues include Cys-300, Cys-302, Cys-305, and His-331.

Belongs to the queuine tRNA-ribosyltransferase family. Homodimer. Within each dimer, one monomer is responsible for RNA recognition and catalysis, while the other monomer binds to the replacement base PreQ1. The cofactor is Zn(2+).

It catalyses the reaction 7-aminomethyl-7-carbaguanine + guanosine(34) in tRNA = 7-aminomethyl-7-carbaguanosine(34) in tRNA + guanine. Its pathway is tRNA modification; tRNA-queuosine biosynthesis. In terms of biological role, catalyzes the base-exchange of a guanine (G) residue with the queuine precursor 7-aminomethyl-7-deazaguanine (PreQ1) at position 34 (anticodon wobble position) in tRNAs with GU(N) anticodons (tRNA-Asp, -Asn, -His and -Tyr). Catalysis occurs through a double-displacement mechanism. The nucleophile active site attacks the C1' of nucleotide 34 to detach the guanine base from the RNA, forming a covalent enzyme-RNA intermediate. The proton acceptor active site deprotonates the incoming PreQ1, allowing a nucleophilic attack on the C1' of the ribose to form the product. After dissociation, two additional enzymatic reactions on the tRNA convert PreQ1 to queuine (Q), resulting in the hypermodified nucleoside queuosine (7-(((4,5-cis-dihydroxy-2-cyclopenten-1-yl)amino)methyl)-7-deazaguanosine). The sequence is that of Queuine tRNA-ribosyltransferase from Pseudoalteromonas translucida (strain TAC 125).